The following is a 1133-amino-acid chain: Error-prone DNA polymerase (1133 aa).

Belongs to the DNA polymerase type-C family. DnaE2 subfamily.

The protein resides in the cytoplasm. The enzyme catalyses DNA(n) + a 2'-deoxyribonucleoside 5'-triphosphate = DNA(n+1) + diphosphate. DNA polymerase involved in damage-induced mutagenesis and translesion synthesis (TLS). It is not the major replicative DNA polymerase. In Anaeromyxobacter sp. (strain K), this protein is Error-prone DNA polymerase.